Here is a 311-residue protein sequence, read N- to C-terminus: Metal-staphylopine import system permease protein CntB (311 aa).

Helical transmembrane passes span 9 to 29 (IALM…LTYI), 105 to 125 (LTII…VVSA), 139 to 159 (VAFF…IIYV), 173 to 193 (GPES…GIYF), 237 to 257 (IFCM…YIFA), and 274 to 294 (FPVI…FNTL). In terms of domain architecture, ABC transmembrane type-1 spans 99-295 (FMNTLKLTII…VLFIVFNTLA (197 aa)).

It belongs to the binding-protein-dependent transport system permease family. In terms of assembly, the complex is composed of two ATP-binding proteins (CntD and CntF), two transmembrane proteins (CntB and CntC) and a solute-binding protein (CntA).

It is found in the cell membrane. In terms of biological role, part of the ABC transporter complex CntABCDF (Opp1) involved in the uptake of metal in complex with the metallophore staphylopine (StP). May be involved in the import of a large array of divalent metals ions such as nickel, cobalt, zinc, copper and iron. Probably responsible for the translocation of the substrate across the membrane. In Staphylococcus aureus (strain Mu50 / ATCC 700699), this protein is Metal-staphylopine import system permease protein CntB.